We begin with the raw amino-acid sequence, 246 residues long: MSSAYDRVSKNYRQSELDKFAAFTSGWWDPHGPQKPLHALNPVRLDYISKRVPLSGARVLDVGCGGGLLSEALARQGAHVTAIDLAPELIKVARLHGLESGIQVDYRIQAIEDLLAEQPAPFDAIACMEMLEHVPDPAAIVDACAHLLKPGGRLFVSTINRTLAAFMLAVVGAEYVVRLLPKGTHQYKDFIRPAELAAWLRHAGLHLEDVSGMRYEPWRNRARLTDRTDINYLACAISPEAPHATE.

Positions 44, 63, 84, and 128 each coordinate S-adenosyl-L-methionine.

This sequence belongs to the methyltransferase superfamily. UbiG/COQ3 family.

The catalysed reaction is a 3-demethylubiquinol + S-adenosyl-L-methionine = a ubiquinol + S-adenosyl-L-homocysteine + H(+). It carries out the reaction a 3-(all-trans-polyprenyl)benzene-1,2-diol + S-adenosyl-L-methionine = a 2-methoxy-6-(all-trans-polyprenyl)phenol + S-adenosyl-L-homocysteine + H(+). It functions in the pathway cofactor biosynthesis; ubiquinone biosynthesis. Functionally, O-methyltransferase that catalyzes the 2 O-methylation steps in the ubiquinone biosynthetic pathway. This Xylella fastidiosa (strain 9a5c) protein is Ubiquinone biosynthesis O-methyltransferase.